Consider the following 579-residue polypeptide: Protein SSH4 (579 aa).

Residues 1-44 (MYVTFNEALDSSFGNLESPNHDFKVGDPNMVPTPPMDSDSAAIS) are Cytoplasmic-facing. The helical; Signal-anchor for type II membrane protein transmembrane segment at 45–65 (LAFLISLSITFAILMLILVVI) threads the bilayer. Over 66 to 579 (AAYVTFCGDD…SSKKKNRSRK (514 aa)) the chain is Lumenal. The B30.2/SPRY domain maps to 166 to 364 (DQQFIKDRGI…DNVSFREALS (199 aa)). N-linked (GlcNAc...) asparagine glycosylation is found at Asn-212 and Asn-356. A Phosphoserine modification is found at Ser-358. Lys-367 participates in a covalent cross-link: Glycyl lysine isopeptide (Lys-Gly) (interchain with G-Cter in ubiquitin). Asn-430 and Asn-507 each carry an N-linked (GlcNAc...) asparagine glycan. The segment at 499–579 (HDSLETDDNN…SSKKKNRSRK (81 aa)) is disordered. Positions 509 to 525 (TDNNVNNNDENAGCNEN) are enriched in low complexity. The segment covering 555-579 (PRNKSTKKRQRNRGKSSKKKNRSRK) has biased composition (basic residues). 2 N-linked (GlcNAc...) asparagine glycosylation sites follow: Asn-557 and Asn-575.

Belongs to the SSH4 family.

The protein resides in the vacuole membrane. It is found in the endosome membrane. Its function is as follows. Components of the endosome-vacuole trafficking pathway that regulates nutrient transport. May be involved in processes which determine whether plasma membrane proteins are degraded or routed to the plasma membrane. Confers leflunomide resistance when overexpressed. This is Protein SSH4 (SSH4) from Saccharomyces cerevisiae (strain YJM789) (Baker's yeast).